A 185-amino-acid polypeptide reads, in one-letter code: Elongation factor P (185 aa).

Belongs to the elongation factor P family.

The protein localises to the cytoplasm. It participates in protein biosynthesis; polypeptide chain elongation. Involved in peptide bond synthesis. Stimulates efficient translation and peptide-bond synthesis on native or reconstituted 70S ribosomes in vitro. Probably functions indirectly by altering the affinity of the ribosome for aminoacyl-tRNA, thus increasing their reactivity as acceptors for peptidyl transferase. This chain is Elongation factor P, found in Limosilactobacillus fermentum (strain NBRC 3956 / LMG 18251) (Lactobacillus fermentum).